The chain runs to 478 residues: Multidrug resistance outer membrane protein MdtQ (478 aa).

Residues 1 to 21 (MNRDSFYPAIACFPLLLMLAG) form the signal peptide. C22 is lipidated: N-palmitoyl cysteine. A lipid anchor (S-diacylglycerol cysteine) is attached at C22.

Belongs to the outer membrane factor (OMF) (TC 1.B.17) family.

Its subcellular location is the cell outer membrane. Could be involved in resistance to puromycin, acriflavine and tetraphenylarsonium chloride. The polypeptide is Multidrug resistance outer membrane protein MdtQ (mdtQ) (Escherichia coli O6:H1 (strain CFT073 / ATCC 700928 / UPEC)).